A 605-amino-acid chain; its full sequence is Pyruvate decarboxylase 2 (605 aa).

2 residues coordinate substrate: aspartate 68 and histidine 155. The interval aspartate 433–isoleucine 515 is thiamine pyrophosphate binding. Aspartate 483, asparagine 510, and glycine 512 together coordinate Mg(2+). Glutamate 516 lines the substrate pocket.

It belongs to the TPP enzyme family. In terms of assembly, homotetramer. A metal cation is required as a cofactor. It depends on thiamine diphosphate as a cofactor.

It carries out the reaction a 2-oxocarboxylate + H(+) = an aldehyde + CO2. The protein is Pyruvate decarboxylase 2 (PDC2) of Oryza sativa subsp. japonica (Rice).